We begin with the raw amino-acid sequence, 256 residues long: 5-keto-4-deoxy-D-glucarate aldolase (256 aa).

The active-site Proton acceptor is the H50. Residue Q151 participates in substrate binding. E153 serves as a coordination point for Mg(2+). Substrate is bound by residues S178 and D179. Residue D179 participates in Mg(2+) binding.

The protein belongs to the HpcH/HpaI aldolase family. KDGluc aldolase subfamily. As to quaternary structure, homohexamer; trimer of dimers. Mg(2+) is required as a cofactor.

It catalyses the reaction 5-dehydro-4-deoxy-D-glucarate = 2-hydroxy-3-oxopropanoate + pyruvate. The enzyme catalyses 2-dehydro-3-deoxy-D-glucarate = 2-hydroxy-3-oxopropanoate + pyruvate. Its pathway is carbohydrate acid metabolism; galactarate degradation; D-glycerate from galactarate: step 2/3. Catalyzes the reversible retro-aldol cleavage of both 5-keto-4-deoxy-D-glucarate and 2-keto-3-deoxy-D-glucarate to pyruvate and tartronic semialdehyde. This Salmonella gallinarum (strain 287/91 / NCTC 13346) protein is 5-keto-4-deoxy-D-glucarate aldolase.